Reading from the N-terminus, the 377-residue chain is Glutamate 5-kinase (377 aa).

Lys20 serves as a coordination point for ATP. The substrate site is built by Ser59, Asp146, and Asn158. ATP is bound by residues 178–179 (SD) and 220–226 (TGGMSTK). The PUA domain maps to 285-363 (RGTLTVDAGA…ADIEAVLGYR (79 aa)).

It belongs to the glutamate 5-kinase family.

It is found in the cytoplasm. It carries out the reaction L-glutamate + ATP = L-glutamyl 5-phosphate + ADP. The protein operates within amino-acid biosynthesis; L-proline biosynthesis; L-glutamate 5-semialdehyde from L-glutamate: step 1/2. Catalyzes the transfer of a phosphate group to glutamate to form L-glutamate 5-phosphate. The polypeptide is Glutamate 5-kinase (Myxococcus xanthus (strain DK1622)).